An 860-amino-acid polypeptide reads, in one-letter code: Receptor-like protein 31 (860 aa).

Positions 1-23 are cleaved as a signal peptide; that stretch reads MMIPSQSCFCFFFMVSFFLHTLA. Over 24–809 the chain is Extracellular; the sequence is SPTLRHCRHD…SEPEEHVINW (786 aa). 10 N-linked (GlcNAc...) asparagine glycosylation sites follow: Asn49, Asn64, Asn88, Asn95, Asn112, Asn117, Asn154, Asn178, Asn202, and Asn213. 6 LRR repeats span residues 108-131, 132-155, 156-179, 181-202, 203-226, and 227-251; these read QHLHNLTLSNCSLYGDIPSSLGNL, FRLTLLDLSYNYLVGQVPPSIGNL, SRLTILDLWDNKLVGQLPASIGNL, QLEYLIFSHNKFSGNIPVTFSN, LTKLLVVNLYNNSFESMLPLDMSG, and FQNLDYFNVGENSFSGTLPKSLFTI. The stretch at 252–276 is one LRR 7; degenerate repeat; it reads PSLRWANLEGNMFKGPIEFRNMYSP. 14 LRR repeats span residues 277 to 301, 302 to 325, 326 to 349, 350 to 374, 376 to 398, 400 to 419, 420 to 444, 446 to 468, 469 to 494, 496 to 517, 518 to 541, 543 to 564, 565 to 591, and 592 to 615; these read STRLQYLFLSQNKFDGPIPDTLSQY, LNLIELDLSFNNLTGSFPTFLFTI, PTLERVNLEGNHLKGPVEFGNMSS, SSSLKFLNFAQNEFNGSIPESVSQY, NLEELHLSFNNFIGTIPRSISKL, KLEYFCLEDNNMVGEVPSWL, WRLTMVALSNNSFNSFGESSEGLDE, QVQWLDLSSNSFQGPFPHWICKL, RSLEILIMSDNRFNGSIPPCLSSFMV, LTDLILRNNSLSGPLPDIFVNA, TKLLSLDVSRNKLDGVLPKSLIHC, AMQLLNVRSNKIKDKFPSWLGS, LPSLHVLILRSNEFYGTLYQPHASIGF, and QSLRVIDVSHNDLIGTLPSFYFSS. N-linked (GlcNAc...) asparagine glycosylation is found at Asn313, Asn346, and Asn364. Asn429 carries an N-linked (GlcNAc...) asparagine glycan. N-linked (GlcNAc...) asparagine glycosylation is found at Asn482, Asn503, and Asn516. 3 N-linked (GlcNAc...) asparagine glycosylation sites follow: Asn642, Asn673, and Asn697. 4 LRR repeats span residues 665 to 690, 691 to 714, 716 to 738, and 740 to 763; these read INEENKVINFSGNRFSGNIPESIGLL, KELRHLNLSSNAFTGNIPQSLANL, KLEALDLSLNQLSGQIPQGLGSL, and FMSTMNFSYNFLEGPVPKSTQFQG. N-linked (GlcNAc...) asparagine glycosylation is found at Asn745 and Asn765. A helical membrane pass occupies residues 810–830; that stretch reads IAAGIAYGPGVVCGLVIGHIF. Topologically, residues 831-860 are cytoplasmic; it reads LSHKHECWFMEKFRRKKPKVVTRIARPSKH.

Belongs to the RLP family.

Its subcellular location is the cell membrane. The chain is Receptor-like protein 31 from Arabidopsis thaliana (Mouse-ear cress).